The primary structure comprises 187 residues: Small ribosomal subunit protein uS5 (187 aa).

The interval 1–20 (MAERENRRDRRDDRSREETP) is disordered. The S5 DRBM domain occupies 22–85 (FADRLVAINR…EQAKRQMIRV (64 aa)).

The protein belongs to the universal ribosomal protein uS5 family. Part of the 30S ribosomal subunit. Contacts proteins S4 and S8.

Its function is as follows. With S4 and S12 plays an important role in translational accuracy. Located at the back of the 30S subunit body where it stabilizes the conformation of the head with respect to the body. In Cereibacter sphaeroides (strain ATCC 17029 / ATH 2.4.9) (Rhodobacter sphaeroides), this protein is Small ribosomal subunit protein uS5.